The primary structure comprises 231 residues: 7-cyano-7-deazaguanine synthase (231 aa).

Position 8–18 (8–18 (LSGGLDSATAA)) interacts with ATP. Residues cysteine 189, cysteine 197, cysteine 200, and cysteine 203 each coordinate Zn(2+).

Belongs to the QueC family. It depends on Zn(2+) as a cofactor.

The catalysed reaction is 7-carboxy-7-deazaguanine + NH4(+) + ATP = 7-cyano-7-deazaguanine + ADP + phosphate + H2O + H(+). Its pathway is purine metabolism; 7-cyano-7-deazaguanine biosynthesis. Catalyzes the ATP-dependent conversion of 7-carboxy-7-deazaguanine (CDG) to 7-cyano-7-deazaguanine (preQ(0)). The chain is 7-cyano-7-deazaguanine synthase from Synechococcus elongatus (strain ATCC 33912 / PCC 7942 / FACHB-805) (Anacystis nidulans R2).